The primary structure comprises 201 residues: LexA repressor (201 aa).

Positions 28–48 (LREIAAQLGISGTLGVMKHLE) form a DNA-binding region, H-T-H motif. Catalysis depends on for autocatalytic cleavage activity residues Ser-120 and Lys-157.

It belongs to the peptidase S24 family. Homodimer.

The enzyme catalyses Hydrolysis of Ala-|-Gly bond in repressor LexA.. Functionally, represses a number of genes involved in the response to DNA damage (SOS response), including recA and lexA. In the presence of single-stranded DNA, RecA interacts with LexA causing an autocatalytic cleavage which disrupts the DNA-binding part of LexA, leading to derepression of the SOS regulon and eventually DNA repair. The polypeptide is LexA repressor (Citrifermentans bemidjiense (strain ATCC BAA-1014 / DSM 16622 / JCM 12645 / Bem) (Geobacter bemidjiensis)).